An 85-amino-acid chain; its full sequence is U4-theraphotoxin-Hhn1a (85 aa).

The signal sequence occupies residues 1–22 (MKMTLIAILTCAAVLVLHITAA). The propeptide occupies 23–48 (EELEAESQLMEVGMPDTELEAVDEER). 3 disulfides stabilise this stretch: Cys52–Cys66, Cys56–Cys77, and Cys71–Cys82.

The protein belongs to the neurotoxin 12 (Hwtx-2) family. 02 (Hwtx-2) subfamily. In terms of assembly, monomer. In terms of tissue distribution, expressed by the venom gland.

The protein localises to the secreted. Its function is as follows. Neurotoxin active on both insects and mammals. In Cyriopagopus hainanus (Chinese bird spider), this protein is U4-theraphotoxin-Hhn1a.